Here is a 240-residue protein sequence, read N- to C-terminus: Eukaryotic translation initiation factor 3 subunit J (240 aa).

A disordered region spans residues 1 to 66 (MADDWESAAD…VPVKTKPSKA (66 aa)). Over residues 27 to 45 (GEDDDDDVKESWEDEEEKK) the composition is skewed to acidic residues.

It belongs to the eIF-3 subunit J family. In terms of assembly, component of the eukaryotic translation initiation factor 3 (eIF-3) complex. The eIF-3 complex interacts with pix.

The protein resides in the cytoplasm. In terms of biological role, component of the eukaryotic translation initiation factor 3 (eIF-3) complex, which is involved in protein synthesis of a specialized repertoire of mRNAs and, together with other initiation factors, stimulates binding of mRNA and methionyl-tRNAi to the 40S ribosome. The eIF-3 complex specifically targets and initiates translation of a subset of mRNAs involved in cell proliferation. The protein is Eukaryotic translation initiation factor 3 subunit J of Drosophila persimilis (Fruit fly).